A 237-amino-acid polypeptide reads, in one-letter code: Photosystem I-associated linker protein CpcL (237 aa).

Positions 11 to 191 (TTQNQRVQSF…DYRDRAGIVR (181 aa)) constitute a PBS-linker domain. A helical transmembrane segment spans residues 208-228 (GVAILGVLLAISAGMTFLFVL).

It belongs to the phycobilisome linker protein family. As to quaternary structure, part of a specialized phycobilisome (PBS), a structure that is usually composed of two distinct substructures: a core complex and a number of rods radiating from the core. This protein is part of a core-less PBS rod (called CpcL-PBS). In vegetative cells associated substoichiometrically with photosystem I and phycobiliproteins phycocyanin as well as phycoerythrocyanin in the thylakoid membrane, not found in conventional, hemidiscoidal phycobilisomes.

The protein resides in the cellular thylakoid membrane. Its function is as follows. Rod linker protein, associated with phycocyanin (PC). Linker polypeptides determine the state of aggregation and the location of the disk-shaped phycobiliprotein units within the phycobilisome (PBS) and modulate their spectroscopic properties in order to mediate a directed and optimal energy transfer. Forms a supercomplex with tetrameric photosystem I (PSI) and PC that allows efficient energy transfer from PC to PSI. This protein seems to be in the middle of the PC hexameric rod and may anchor the PC rods at the periphery of PSI tetramers. May be involved in the cyclic electron transport around PSI that provides ATP needed for N(2) fixation in heterocysts. This chain is Photosystem I-associated linker protein CpcL, found in Nostoc sp. (strain PCC 7120 / SAG 25.82 / UTEX 2576).